The primary structure comprises 329 residues: GTP 3',8-cyclase (329 aa).

The 227-residue stretch at 8 to 234 (AFARKFYYLR…QLRQRSDGPA (227 aa)) folds into the Radical SAM core domain. Arginine 17 provides a ligand contact to GTP. The [4Fe-4S] cluster site is built by cysteine 24 and cysteine 28. Residue tyrosine 30 participates in S-adenosyl-L-methionine binding. Cysteine 31 is a [4Fe-4S] cluster binding site. Residue arginine 68 coordinates GTP. Position 72 (glycine 72) interacts with S-adenosyl-L-methionine. Residue threonine 99 coordinates GTP. Serine 123 contacts S-adenosyl-L-methionine. Residue lysine 160 coordinates GTP. Position 194 (methionine 194) interacts with S-adenosyl-L-methionine. Cysteine 257 and cysteine 260 together coordinate [4Fe-4S] cluster. GTP is bound at residue 262-264 (RLR). Cysteine 274 is a [4Fe-4S] cluster binding site.

Belongs to the radical SAM superfamily. MoaA family. As to quaternary structure, monomer and homodimer. [4Fe-4S] cluster is required as a cofactor.

The enzyme catalyses GTP + AH2 + S-adenosyl-L-methionine = (8S)-3',8-cyclo-7,8-dihydroguanosine 5'-triphosphate + 5'-deoxyadenosine + L-methionine + A + H(+). It participates in cofactor biosynthesis; molybdopterin biosynthesis. Functionally, catalyzes the cyclization of GTP to (8S)-3',8-cyclo-7,8-dihydroguanosine 5'-triphosphate. The chain is GTP 3',8-cyclase from Escherichia fergusonii (strain ATCC 35469 / DSM 13698 / CCUG 18766 / IAM 14443 / JCM 21226 / LMG 7866 / NBRC 102419 / NCTC 12128 / CDC 0568-73).